A 753-amino-acid chain; its full sequence is Taperin (753 aa).

The tract at residues 141 to 348 is disordered; the sequence is FDSPAAPRRR…IRPSSKPDME (208 aa). The segment covering 182 to 197 has biased composition (pro residues); that stretch reads PAPPVLPSQPAPPISP. Polar residues-rich tracts occupy residues 230-239 and 250-263; these read LQKTGSNSFT and VNRSLSNGPMTQES. Ser-274 carries the post-translational modification Phosphoserine. Over residues 300–322 the composition is skewed to low complexity; it reads TPSATPVGPPAFLAPSPASATPS. Positions 323-335 are enriched in polar residues; that stretch reads QRQWVSSATSAND. The segment covering 337–347 has biased composition (basic and acidic residues); sequence FEIRPSSKPDM. 3 positions are modified to phosphoserine: Ser-402, Ser-458, and Ser-502. The interval 438–488 is disordered; it reads GCPRPAISDTDKSVRRQRPASPPPFLPATTEAEPAEGLGVPGLTKNGQEPV. 2 disordered regions span residues 544–583 and 637–676; these read FTVVPKRKPGTLQEPHLSQTNGQFQQGAEEQDADSLSGPH and FEYPSESSLAQEEAEEEEEEEEEEEGEDGEEEEVGPDSEK. A compositionally biased stretch (polar residues) spans 559–571; the sequence is HLSQTNGQFQQGA. The segment covering 648 to 672 has biased composition (acidic residues); it reads EEAEEEEEEEEEEEGEDGEEEEVGP.

This sequence belongs to the taperin family. Interacts with GRXCR2; the interaction restricts TPRN to the stereocilum basal region. Interacts with actin ACTB; the interaction may stabilize stereocilia. Interacts with CLIC5. Interacts with PTPRQ. TPRN, CLIC5 and PTPQR form concentric rings at the base of stereocilia and may form a complex. Interacts with phosphatase PPP1CA; the interaction results in inhibition of PPC1A phosphatase activity. Interacts with DNA damage response proteins XRCC6/KU70, XRCC5/KU80, PARP1, TOP1 and TOP2A; these interactions recruit TPRN to sites of DNA damage where it may play a role in DNA repair.

It is found in the cell projection. Its subcellular location is the stereocilium. It localises to the microvillus. The protein resides in the nucleus. The protein localises to the nucleoplasm. It is found in the cytoplasm. Essential for hearing. Required for maintenance of stereocilia on both inner and outer hair cells. Necessary for the integrity of the stereociliary rootlet. May act as an actin cytoskeleton regulator involved in the regulation of actin dynamics at the pointed end in hair cells. Forms rings at the base of stereocilia and binds actin filaments in the stereocilia which may stabilize the stereocilia. Acts as a strong inhibitor of PPP1CA phosphatase activity. Recruited to sites of DNA damage and may play a role in DNA damage repair. The chain is Taperin (Tprn) from Rattus norvegicus (Rat).